The chain runs to 225 residues: Small ribosomal subunit protein uS3 (225 aa).

Positions 38–106 constitute a KH type-2 domain; sequence LRKFLQGKLQ…EVSLNIVEIR (69 aa).

This sequence belongs to the universal ribosomal protein uS3 family. In terms of assembly, part of the 30S ribosomal subunit. Forms a tight complex with proteins S10 and S14.

Binds the lower part of the 30S subunit head. Binds mRNA in the 70S ribosome, positioning it for translation. The polypeptide is Small ribosomal subunit protein uS3 (Rhodospirillum centenum (strain ATCC 51521 / SW)).